The primary structure comprises 88 residues: Putative defensin-like protein 264 (88 aa).

The signal sequence occupies residues 1-26 (MEKMVLRKVVLLAILLSLSCLWVAKA). Disulfide bonds link Cys47-Cys65, Cys53-Cys70, and Cys57-Cys72.

It belongs to the DEFL family.

It is found in the secreted. This is Putative defensin-like protein 264 from Arabidopsis thaliana (Mouse-ear cress).